The following is a 55-amino-acid chain: Histone H1 (55 aa).

The segment covering 1–15 has biased composition (low complexity); it reads MAEVAPAPAAAAPAK. The interval 1–28 is disordered; it reads MAEVAPAPAAAAPAKAPKKKAAAKPKKA. Alanine 2 bears the N-acetylalanine mark. The segment covering 16–27 has biased composition (basic residues); that stretch reads APKKKAAAKPKK. An H15 domain is found at 28-55; that stretch reads AGPSVGELIVKAVSASKERSGVSLAALK.

Belongs to the histone H1/H5 family.

The protein resides in the nucleus. The protein localises to the chromosome. It is found in the secreted. Its function is as follows. Histones H1 are necessary for the condensation of nucleosome chains into higher-order structures. SAMP H1 has antibacterial activity against Gram-negative bacteria E.coli, A.salmonicida subsp salmonicida, V.anguillarum and S.typhimurium and Gram-positive bacteria B.subtilis and L.ivanovii. The protein is Histone H1 of Salmo salar (Atlantic salmon).